The chain runs to 432 residues: Malate dehydrogenase [NADP], chloroplastic (432 aa).

Residues 1 to 40 (MGLSTVYSPAGPRLVPAPLGRCRSAQPRRPRRAPLATVRC) constitute a chloroplast transit peptide. The tract at residues 18–37 (PLGRCRSAQPRRPRRAPLAT) is disordered. The cysteines at positions 67 and 72 are disulfide-linked. 96–102 (GAAGMIS) contacts NADP(+). Substrate contacts are provided by Arg-177 and Arg-183. Asn-190 contacts NADP(+). An NAD(+)-binding site is contributed by Gln-197. 214–216 (VGN) serves as a coordination point for NADP(+). The substrate site is built by Asn-216 and Arg-247. His-272 functions as the Proton acceptor in the catalytic mechanism. A disulfide bridge links Cys-408 with Cys-420.

This sequence belongs to the LDH/MDH superfamily. MDH type 2 family. Homodimer.

Its subcellular location is the plastid. It localises to the chloroplast. It carries out the reaction (S)-malate + NADP(+) = oxaloacetate + NADPH + H(+). With respect to regulation, chloroplast NADP-MDH is activated upon illumination. In order to be enzymatically active, disulfide bridges on the protein must be reduced by thioredoxin which receives electrons from ferredoxin and the electron transport system of photosynthesis. In terms of biological role, the chloroplastic, NADP-dependent form is essential for the photosynthesis C4 cycle, which allows plants to circumvent the problem of photorespiration. In C4 plants, NADP-MDH activity acts to convert oxaloacetate to malate in chloroplasts of mesophyll cells for transport to the bundle sheath cells. The sequence is that of Malate dehydrogenase [NADP], chloroplastic from Zea mays (Maize).